The primary structure comprises 448 residues: MSLKRHSLRRNACHLETRAGIPTILYSDATGQRGMDKNIGEQLNRAYEAFRQACMDRDSAVRELQQKQTENYEQRIREQQEQLSFQQNLIDRLKSQLLLVDSSRDNSYGYVPLLEDSDRRKNNLTLDEPHDKVKLGTLRDKQSKVRRQEVSSGKESAKGLNIPLHHERDNIEKTFWDLKEEFHRICLLAKAQKDHLSKLNIPDIATDTQCSVPIQCTDKTEKQEALFKPQAKDDINRGMSCVTAVTPRGLGRDEEDTSFESLSKFNVKFPPMDNDSIFLHSTPEAPSILAPATPETVCQDRFNMEVRDNPGNFVKTEETLFEIQGIDPITSAIQNLKTTDKTNPSNLRATCLPAGDHNVFYVNTFPLQDPPDAPFPSLDSPGKAVRGPQQPFWKPFLNQDTDLVVPSDSDSELLKPLVCEFCQELFPPSITSRGDFLRHLNTHFNGET.

Residues 35-65 (MDKNIGEQLNRAYEAFRQACMDRDSAVRELQ) are necessary for interaction with ZC3H12A. A coiled-coil region spans residues 60-98 (AVRELQQKQTENYEQRIREQQEQLSFQQNLIDRLKSQLL). The segment at 105-224 (DNSYGYVPLL…QCTDKTEKQE (120 aa)) is necessary for interaction with TRAF6. The interval 166-205 (HERDNIEKTFWDLKEEFHRICLLAKAQKDHLSKLNIPDIA) is interaction with TBK1 and IKBKE. A TRAF family member interaction region spans residues 205-224 (ATDTQCSVPIQCTDKTEKQE). Position 211 is a phosphoserine (Ser-211). Thr-246 is subject to Phosphothreonine. Ser-258, Ser-261, Ser-377, and Ser-380 each carry phosphoserine. The segment at 416–443 (PLVCEFCQELFPPSITSRGDFLRHLNTH) adopts a UBZ1-type zinc-finger fold. Residues Cys-419, Cys-422, His-439, and His-443 each contribute to the Zn(2+) site.

Homodimer. Found in a deubiquitination complex with TANK, USP10 and ZC3H12A; this complex inhibits genotoxic stress- or interleukin-1-beta-mediated NF-kappaB activation by promoting IKBKG or TRAF6 deubiquitination. Interacts with IKBKG; this interaction increases in response to DNA damage. Interacts with TRAF6; this interaction increases in response to DNA damage and recruits USP10 to the ubiquitinated TRAF6. Interacts with USP10; this interaction increases in response to DNA damage. Interacts with TBK1 and IKBKE. Also interacts with TRAF1, TRAF2, and TRAF3 by binding to their TRAF-C domains; the interaction with TRAF2 is disrupted by the phosphorylation of TANK by IKBKE. Interacts more strongly with TRAF1 and TRAF2 than TRAF3. Part of a ternary complex consisting of TANK, IKBKB and IKBKG. Interacts with IKBKG; the interaction is enhanced by IKBKE and TBK1. In terms of tissue distribution, heart, brain, spleen, lung, liver, skeletal muscle, kidney and testis.

The protein localises to the cytoplasm. Adapter protein involved in I-kappa-B-kinase (IKK) regulation which constitutively binds TBK1 and IKBKE playing a role in antiviral innate immunity. Acts as a regulator of TRAF function by maintaining them in a latent state. Blocks TRAF2 binding to LMP1 and inhibits LMP1-mediated NF-kappa-B activation. Negatively regulates NF-kappaB signaling and cell survival upon DNA damage. Plays a role as an adapter to assemble ZC3H12A, USP10 in a deubiquitination complex which plays a negative feedback response to attenuate NF-kappaB activation through the deubiquitination of IKBKG or TRAF6 in response to interleukin-1-beta (IL1B) stimulation or upon DNA damage. Promotes UBP10-induced deubiquitination of TRAF6 in response to DNA damage. May control negatively TRAF2-mediated NF-kappa-B activation signaled by CD40, TNFR1 and TNFR2. Essential for the efficient induction of IRF-dependent transcription following infection with Sendai virus. This is TRAF family member-associated NF-kappa-B activator (Tank) from Mus musculus (Mouse).